Reading from the N-terminus, the 313-residue chain is MRTLVTGAAGFIGSTLVDRLLADGHGVVGLDDLSSGRAENLHSAENSDKFEFVKADIVDADLTGLLAEFKPEVIFHLAAQISVKRSVDDPPFDATVNVVGTVRLAEAARLAGVRKVVHTSSGGSVYGTPPAYPTSEDMPVNPASPYAAGKVAGEVYLNMYRNLYDLDCSHIAPANVYGPRQDPHGEAGVVAIFSEALLAGRTTKIFGDGSDTRDYVFVDDVVDAFVRAGGPAGGGQRFNVGTGVETSTRELHTAIAGAVGAPDEPEFHPPRLGDLRRSRLDNTRAREVLGWQPQVALAEGIAKTVEFFRNKSQ.

NAD(+)-binding positions include 11–12 (FI), 31–36 (DDLSSG), 56–57 (DI), and 77–81 (LAAQI). Positions 121 and 146 each coordinate substrate. 2 residues coordinate NAD(+): tyrosine 146 and lysine 150. Tyrosine 146 functions as the Proton acceptor in the catalytic mechanism. Residues asparagine 175, 189–190 (VV), 204–206 (KIF), arginine 213, and 271–274 (RLGD) each bind substrate.

This sequence belongs to the NAD(P)-dependent epimerase/dehydratase family. As to quaternary structure, homodimer. Requires NAD(+) as cofactor.

It carries out the reaction UDP-alpha-D-glucose = UDP-alpha-D-galactose. Its pathway is carbohydrate metabolism; galactose metabolism. Functionally, involved in the metabolism of galactose. Catalyzes the conversion of UDP-galactose (UDP-Gal) to UDP-glucose (UDP-Glc) through a mechanism involving the transient reduction of NAD. This chain is UDP-glucose 4-epimerase, found in Mycolicibacterium smegmatis (strain ATCC 700084 / mc(2)155) (Mycobacterium smegmatis).